The primary structure comprises 302 residues: Glutaminase (302 aa).

Substrate is bound by residues Ser61, Asn111, Glu155, Asn162, Tyr186, Tyr238, and Val256.

Belongs to the glutaminase family. As to quaternary structure, homotetramer.

The catalysed reaction is L-glutamine + H2O = L-glutamate + NH4(+). This chain is Glutaminase, found in Pseudomonas paraeruginosa (strain DSM 24068 / PA7) (Pseudomonas aeruginosa (strain PA7)).